Consider the following 185-residue polypeptide: Adenine phosphoribosyltransferase (185 aa).

This sequence belongs to the purine/pyrimidine phosphoribosyltransferase family. As to quaternary structure, homodimer.

It localises to the cytoplasm. The enzyme catalyses AMP + diphosphate = 5-phospho-alpha-D-ribose 1-diphosphate + adenine. Its pathway is purine metabolism; AMP biosynthesis via salvage pathway; AMP from adenine: step 1/1. In terms of biological role, catalyzes a salvage reaction resulting in the formation of AMP, that is energically less costly than de novo synthesis. The sequence is that of Adenine phosphoribosyltransferase from Rubrobacter xylanophilus (strain DSM 9941 / JCM 11954 / NBRC 16129 / PRD-1).